The following is a 1435-amino-acid chain: Protein SPP41 (1435 aa).

7 disordered regions span residues 16-74 (VGNL…NIEI), 88-265 (VANA…ENTL), 286-309 (AKQT…VEAQ), 322-424 (ELLS…DDEF), 442-482 (ETST…DSLD), 519-708 (SVSD…MKVP), and 934-972 (QQLD…AGHT). Acidic residues predominate over residues 27 to 42 (GQEEGEVQGGEQEGDD). Basic and acidic residues-rich tracts occupy residues 53-63 (IEPKHPDDSQH), 98-127 (EQAK…KEQQ), and 139-154 (LKSD…ERRV). The UIM domain occupies 171 to 190 (QDDENLRMAILESLQELNTN). Over residues 196 to 205 (EPEKHEHAAP) the composition is skewed to basic and acidic residues. The segment covering 211–223 (SKKSSKKKKKDKS) has biased composition (basic residues). Over residues 224 to 234 (KNRESSKDKSS) the composition is skewed to basic and acidic residues. Residues 235-249 (KKSKSSSHSKKHAKD) show a composition bias toward basic residues. A compositionally biased stretch (polar residues) spans 286–301 (AKQTVDIQDNSHTDNT). The segment covering 345–355 (KAVEPPRKPTA) has biased composition (basic and acidic residues). Residues 367–383 (KPKKRPPQEKKKTKSKT) show a composition bias toward basic residues. Low complexity predominate over residues 384 to 398 (SKAASTANKSPASES). Composition is skewed to polar residues over residues 442-451 (ETSTHTATQD) and 459-482 (DFTS…DSLD). 3 stretches are compositionally biased toward basic and acidic residues: residues 524 to 548 (LPHD…EKKT), 610 to 628 (KNKE…AREE), and 637 to 652 (KQRL…KIVE). A compositionally biased stretch (basic residues) spans 665–674 (KSGKPKKPYR). Residues 676–691 (WTPEELLKRSQEAEKP) show a composition bias toward basic and acidic residues. A Nuclear localization signal motif is present at residues 683 to 699 (KRSQEAEKPRKVKKERK). Basic residues predominate over residues 692 to 706 (RKVKKERKKKEKKMK). A Glycyl lysine isopeptide (Lys-Gly) (interchain with G-Cter in SUMO) cross-link involves residue Lys981. The span at 1005–1014 (KLELTKRAES) shows a compositional bias: basic and acidic residues. Residues 1005-1125 (KLELTKRAES…DSVNTTTGKP (121 aa)) form a disordered region. The residue at position 1014 (Ser1014) is a Phosphoserine. The segment covering 1021-1032 (NVETAKETQSVQ) has biased composition (polar residues). 2 stretches are compositionally biased toward basic and acidic residues: residues 1033–1082 (EIKE…EKIA) and 1091–1103 (LSDK…KSTL). Ser1067 is modified (phosphoserine). The segment covering 1108–1123 (AQLTGNEPDSVNTTTG) has biased composition (polar residues). Residue Lys1154 forms a Glycyl lysine isopeptide (Lys-Gly) (interchain with G-Cter in SUMO) linkage.

Interacts with PRP8 and RAP1.

The protein localises to the nucleus. Functionally, negative regulator of PRP3 and PRP4 genes. This Saccharomyces cerevisiae (strain ATCC 204508 / S288c) (Baker's yeast) protein is Protein SPP41 (SPP41).